Consider the following 262-residue polypeptide: Small ribosomal subunit protein eS4 (262 aa).

Positions 42-105 (LPLIIMLRNR…GEFFRLLYDV (64 aa)) constitute an S4 RNA-binding domain.

The protein belongs to the eukaryotic ribosomal protein eS4 family.

The sequence is that of Small ribosomal subunit protein eS4 (RpS4) from Ixodes scapularis (Black-legged tick).